Consider the following 323-residue polypeptide: Transcription factor MYB56 (323 aa).

The span at 1 to 14 (MNPNLLEKDLRGKE) shows a compositional bias: basic and acidic residues. Positions 1–84 (MNPNLLEKDL…EKSLRMRGKS (84 aa)) are disordered. The segment covering 27 to 60 (NFRSLPNSHTAACKTSLNNPSISRNHPHNKSASV) has biased composition (polar residues). The span at 66-78 (EHGNERGENEKSL) shows a compositional bias: basic and acidic residues. 2 HTH myb-type domains span residues 88 to 139 (TKVC…FNQL) and 140 to 194 (DPRI…ARRT). 2 consecutive DNA-binding regions (H-T-H motif) follow at residues 116–138 (WNLISNHLLGRSGKSCRLRWFNQ) and 167–190 (WALISRLFPGRTDNAVKNHWHVIM). The segment at 192-217 (RRTRESQRQRQQPPPTLSRDAEMTVS) is disordered.

Forms homodimer. Interacts with the dephosphorylated active form of BES1 in the nucleus of quiescent center (QC) cells. Interacts with BPM1, BPM2, BPM3, BPM4, BPM5 and BPM6 at the promoter of FLOWERING LOCUS T (FT). In terms of tissue distribution, mostly expressed in flowers (at protein level) and siliques, and, to a lower extent, in roots, stems and leaves. Expressed in embryos (e.g. heart and torpedo stages) and cotyledons, and, at low levels, in roots and inflorescence. Accumulates specifically in root apical meristem quiescent center (QC) and vascular initial cells.

It is found in the nucleus. The protein localises to the cytoplasm. It localises to the cytosol. In terms of biological role, acts as a cell-specific local repressor of quiescent center (QC) self-renewal by cell divisions in the primary root. Counteracts brassinosteroid (BR)-mediated cell division in the QC cells. Regulates maternally seed size, especially before the heart stage, promoting both endothelial cells expansion and cell number in the outer integument layer of the seed coat. Modulates the expression of genes involved in cell wall metabolism such as cell division and expansion. Negative regulator of flowering via the repression of FT transcription. This chain is Transcription factor MYB56, found in Arabidopsis thaliana (Mouse-ear cress).